The following is a 262-amino-acid chain: MIELEKLDFAKSVEGVEAFSTTRGQVDGRNAYSGVNLCDYVGDDALRVLDARLTLAMQLGVDLDDLVMPRQTHSCRVAVIDERFRALDIDEQEAALEGVDALVTRLQGIVIGVNTADCVPIVLVDSQAGIVAVSHAGWRGTVGRIAKAVVEEMCRQGATVDRIQAAMGPSICQDCFEVGDEVVEAFKKAHFNLNDIVVRNPATGKAHIDLRAANRAVLVAAGVPAANIVESQHCSRCEHTSFFSARRLGINSGRTFTGIYRK.

Cu cation is bound by residues asparagine 36, tyrosine 40, methionine 68, histidine 73, cysteine 75, asparagine 114, cysteine 118, histidine 135, cysteine 172, cysteine 175, cysteine 234, and cysteine 237.

The protein belongs to the purine nucleoside phosphorylase YfiH/LACC1 family. Homodimer. Cu cation serves as cofactor.

It catalyses the reaction adenosine + phosphate = alpha-D-ribose 1-phosphate + adenine. The enzyme catalyses S-methyl-5'-thioadenosine + phosphate = 5-(methylsulfanyl)-alpha-D-ribose 1-phosphate + adenine. The catalysed reaction is inosine + phosphate = alpha-D-ribose 1-phosphate + hypoxanthine. It carries out the reaction adenosine + H2O + H(+) = inosine + NH4(+). Its function is as follows. Purine nucleoside enzyme that catalyzes the phosphorolysis of adenosine and inosine nucleosides, yielding D-ribose 1-phosphate and the respective free bases, adenine and hypoxanthine. Also catalyzes the phosphorolysis of S-methyl-5'-thioadenosine into adenine and S-methyl-5-thio-alpha-D-ribose 1-phosphate. Also has adenosine deaminase activity. Also acts as a multicopper oxidase able to oxidize a wide variety of polyphenols and related compounds in vitro. Displays substrate preference as follows: syringaldazine &gt; 2,6-dimethoxyphenol &gt; veratryl alcohol &gt; guaiacol &gt; tetramethylbenzidine &gt; 4-methoxybenzyl alcohol &gt; 2,2'-azino-bis(3-ethylbenzthiazoline-6-sulfonic acid) (ABTS) &gt;&gt; phenol red &gt; 1-hydroxybenzotriazole. Cannot use 3,4-dimetoxybenzyl alcohol and violuric acid as substrates. As this enzyme is derived from a rumen microbial community, it may have a role in the digestion of complex plant materials such as ryegrass lignin. The chain is Adenosine deaminase RL5 from Unknown prokaryotic organism.